We begin with the raw amino-acid sequence, 214 residues long: EEF1A lysine methyltransferase 1 (214 aa).

Ser2 bears the N-acetylserine mark. Ser2 carries the phosphoserine modification.

Belongs to the class I-like SAM-binding methyltransferase superfamily. EFM5 family.

Its subcellular location is the cytoplasm. It carries out the reaction L-lysyl-[protein] + 3 S-adenosyl-L-methionine = N(6),N(6),N(6)-trimethyl-L-lysyl-[protein] + 3 S-adenosyl-L-homocysteine + 3 H(+). In terms of biological role, protein N-lysine methyltransferase that selectively catalyzes the trimethylation of EEF1A at 'Lys-79'. This is EEF1A lysine methyltransferase 1 from Homo sapiens (Human).